A 463-amino-acid chain; its full sequence is Retinoic acid receptor RXR-gamma (463 aa).

The interval 1-138 is modulating; it reads MYGNYSHFMK…TSPGSLVKHI (138 aa). The tract at residues 18-53 is disordered; that stretch reads SPGHTGSTSMSPSAALSTGKPMDSHPSYTDTPVSAP. Residues 21 to 33 are compositionally biased toward polar residues; the sequence is HTGSTSMSPSAAL. 2 consecutive NR C4-type zinc fingers follow at residues 139–159 and 175–194; these read CAIC…CEGC and CRDN…CQYC. A DNA-binding region (nuclear receptor) is located at residues 139–204; sequence CAICGDRSSG…RYQKCLVMGM (66 aa). The tract at residues 205–230 is hinge; that stretch reads KREAVQEERQRSRERAESEAECASSG. A compositionally biased stretch (basic and acidic residues) spans 211–222; sequence EERQRSRERAES. Positions 211-232 are disordered; sequence EERQRSRERAESEAECASSGHE. The NR LBD domain maps to 231–459; it reads HEDMPVERIL…TFLMEMLETP (229 aa).

This sequence belongs to the nuclear hormone receptor family. NR2 subfamily. In terms of assembly, homodimer. Heterodimer with a RAR molecule. Binds DNA preferentially as a RAR/RXR heterodimer. Interacts with RARA. In terms of processing, acetylated by EP300.

The protein localises to the nucleus. It is found in the cytoplasm. Functionally, receptor for retinoic acid. Retinoic acid receptors bind as heterodimers to their target response elements in response to their ligands, all-trans or 9-cis retinoic acid, and regulate gene expression in various biological processes. The RAR/RXR heterodimers bind to the retinoic acid response elements (RARE) composed of tandem 5'-AGGTCA-3' sites known as DR1-DR5. The high affinity ligand for RXRs is 9-cis retinoic acid. In Pongo abelii (Sumatran orangutan), this protein is Retinoic acid receptor RXR-gamma (RXRG).